The primary structure comprises 186 residues: MAKLILIIVTQILLIAAVVSARKGENFAKTIDKKHFGLRKEKLTHFRVYWHDILSGSNPSSVVINPPISNSSFFGSVTVIDNRLTTEVAVNSTLVGQAQGIYAATGQRDASALMVMNFAFKTGKYNGSSIAILGRNAVLTKVREMPVIGGSGLFRFARGYVEARTMWFDQKSGDATVEYSCYVLHY.

The signal sequence occupies residues Met-1–Ala-21. Asn-70, Asn-91, and Asn-126 each carry an N-linked (GlcNAc...) asparagine glycan.

Belongs to the plant dirigent protein family. In terms of assembly, homodimer.

The protein localises to the secreted. It localises to the extracellular space. It is found in the apoplast. In terms of biological role, dirigent proteins impart stereoselectivity on the phenoxy radical-coupling reaction, yielding optically active lignans from two molecules of coniferyl alcohol in the biosynthesis of lignans, flavonolignans, and alkaloids and thus plays a central role in plant secondary metabolism. The chain is Dirigent protein 7 (DIR7) from Arabidopsis thaliana (Mouse-ear cress).